The sequence spans 72 residues: Translation initiation factor IF-1 (72 aa).

Residues 1–72 form the S1-like domain; the sequence is MAKEDVIEVE…NRGRIVYRYK (72 aa).

This sequence belongs to the IF-1 family. As to quaternary structure, component of the 30S ribosomal translation pre-initiation complex which assembles on the 30S ribosome in the order IF-2 and IF-3, IF-1 and N-formylmethionyl-tRNA(fMet); mRNA recruitment can occur at any time during PIC assembly.

The protein localises to the cytoplasm. In terms of biological role, one of the essential components for the initiation of protein synthesis. Stabilizes the binding of IF-2 and IF-3 on the 30S subunit to which N-formylmethionyl-tRNA(fMet) subsequently binds. Helps modulate mRNA selection, yielding the 30S pre-initiation complex (PIC). Upon addition of the 50S ribosomal subunit IF-1, IF-2 and IF-3 are released leaving the mature 70S translation initiation complex. In Moorella thermoacetica (strain ATCC 39073 / JCM 9320), this protein is Translation initiation factor IF-1.